The primary structure comprises 306 residues: Aspartate carbamoyltransferase catalytic subunit (306 aa).

Residues Arg51 and Thr52 each contribute to the carbamoyl phosphate site. Lys79 provides a ligand contact to L-aspartate. Carbamoyl phosphate is bound by residues Arg101, His129, and Gln132. L-aspartate contacts are provided by Arg162 and Arg213. Ala254 and Pro255 together coordinate carbamoyl phosphate.

The protein belongs to the aspartate/ornithine carbamoyltransferase superfamily. ATCase family. In terms of assembly, heterododecamer (2C3:3R2) of six catalytic PyrB chains organized as two trimers (C3), and six regulatory PyrI chains organized as three dimers (R2).

The catalysed reaction is carbamoyl phosphate + L-aspartate = N-carbamoyl-L-aspartate + phosphate + H(+). It functions in the pathway pyrimidine metabolism; UMP biosynthesis via de novo pathway; (S)-dihydroorotate from bicarbonate: step 2/3. In terms of biological role, catalyzes the condensation of carbamoyl phosphate and aspartate to form carbamoyl aspartate and inorganic phosphate, the committed step in the de novo pyrimidine nucleotide biosynthesis pathway. The protein is Aspartate carbamoyltransferase catalytic subunit of Bacillus thuringiensis (strain Al Hakam).